The primary structure comprises 156 residues: MGPKLLESRLCLLLLLGLVLMLASCLGQTPSQWFAIQHINNNANLQCNVEMQRINRFRRTCKGLNTFLHTSFANAVGVCGNPSGLCSDNISRNCHNSSSRVRITVCNITSRRRTPYTQCRYQPRRSLEYYTVACNPRTPQDSPMYPVVPVHLDGTF.

The first 25 residues, Met-1–Cys-25, serve as a signal peptide directing secretion. The active-site Proton acceptor is His-38. Intrachain disulfides connect Cys-47–Cys-106, Cys-61–Cys-119, Cys-79–Cys-134, and Cys-86–Cys-94. Substrate is bound at residue Lys-62–Thr-66. 3 N-linked (GlcNAc...) asparagine glycosylation sites follow: Asn-89, Asn-96, and Asn-107. The active-site Proton donor is His-151.

Belongs to the pancreatic ribonuclease family.

The protein resides in the cytoplasmic granule. Cytotoxin and helminthotoxin with ribonuclease activity. Selectively chemotactic for dendritic cells. Possesses a wide variety of biological activities. This chain is Eosinophil cationic protein 2 (Ear2), found in Mus musculus (Mouse).